Reading from the N-terminus, the 510-residue chain is Maturase K (510 aa).

It belongs to the intron maturase 2 family. MatK subfamily.

Its subcellular location is the plastid. The protein resides in the chloroplast. Usually encoded in the trnK tRNA gene intron. Probably assists in splicing its own and other chloroplast group II introns. In Populus trichocarpa (Western balsam poplar), this protein is Maturase K.